A 988-amino-acid polypeptide reads, in one-letter code: Bifunctional glutamine synthetase adenylyltransferase/adenylyl-removing enzyme (988 aa).

Positions 1–474 (MSSSAIDADI…HYSKLFEGDP (474 aa)) are adenylyl removase. The interval 480-988 (LPIDYAGGAE…FNRLIGGNGE (509 aa)) is adenylyl transferase.

Belongs to the GlnE family. Requires Mg(2+) as cofactor.

The catalysed reaction is [glutamine synthetase]-O(4)-(5'-adenylyl)-L-tyrosine + phosphate = [glutamine synthetase]-L-tyrosine + ADP. The enzyme catalyses [glutamine synthetase]-L-tyrosine + ATP = [glutamine synthetase]-O(4)-(5'-adenylyl)-L-tyrosine + diphosphate. Involved in the regulation of glutamine synthetase GlnA, a key enzyme in the process to assimilate ammonia. When cellular nitrogen levels are high, the C-terminal adenylyl transferase (AT) inactivates GlnA by covalent transfer of an adenylyl group from ATP to specific tyrosine residue of GlnA, thus reducing its activity. Conversely, when nitrogen levels are low, the N-terminal adenylyl removase (AR) activates GlnA by removing the adenylyl group by phosphorolysis, increasing its activity. The regulatory region of GlnE binds the signal transduction protein PII (GlnB) which indicates the nitrogen status of the cell. In Rhodopseudomonas palustris (strain HaA2), this protein is Bifunctional glutamine synthetase adenylyltransferase/adenylyl-removing enzyme.